A 245-amino-acid polypeptide reads, in one-letter code: 1-(5-phosphoribosyl)-5-[(5-phosphoribosylamino)methylideneamino] imidazole-4-carboxamide isomerase (245 aa).

D7 functions as the Proton acceptor in the catalytic mechanism. D129 (proton donor) is an active-site residue.

The protein belongs to the HisA/HisF family.

The protein localises to the cytoplasm. The catalysed reaction is 1-(5-phospho-beta-D-ribosyl)-5-[(5-phospho-beta-D-ribosylamino)methylideneamino]imidazole-4-carboxamide = 5-[(5-phospho-1-deoxy-D-ribulos-1-ylimino)methylamino]-1-(5-phospho-beta-D-ribosyl)imidazole-4-carboxamide. It functions in the pathway amino-acid biosynthesis; L-histidine biosynthesis; L-histidine from 5-phospho-alpha-D-ribose 1-diphosphate: step 4/9. In Salmonella enteritidis PT4 (strain P125109), this protein is 1-(5-phosphoribosyl)-5-[(5-phosphoribosylamino)methylideneamino] imidazole-4-carboxamide isomerase.